The primary structure comprises 267 residues: Energy-coupling factor transporter transmembrane protein EcfT (267 aa).

5 consecutive transmembrane segments (helical) span residues 30–50 (FWYVVIIFFAKGPLTYLLLVA), 67–87 (WAGLKPLLWVIGLTIAIQVLF), 110–130 (ALVILARFILIVLASTVLTAT), 152–172 (VPVNQIAMMISIALRFIPTIM), and 247–267 (SIALAVVVIVSVLFFVARILL).

This sequence belongs to the energy-coupling factor EcfT family. Forms a stable energy-coupling factor (ECF) transporter complex composed of 2 membrane-embedded substrate-binding proteins (S component), 2 ATP-binding proteins (A component) and 2 transmembrane proteins (T component). May be able to interact with more than 1 S component at a time.

The protein resides in the cell membrane. In terms of biological role, transmembrane (T) component of an energy-coupling factor (ECF) ABC-transporter complex. Unlike classic ABC transporters this ECF transporter provides the energy necessary to transport a number of different substrates. This Limosilactobacillus fermentum (strain CECT 5716 / Lc40) (Lactobacillus fermentum) protein is Energy-coupling factor transporter transmembrane protein EcfT.